A 142-amino-acid polypeptide reads, in one-letter code: Putative pre-16S rRNA nuclease (142 aa).

The protein belongs to the YqgF nuclease family.

It localises to the cytoplasm. Its function is as follows. Could be a nuclease involved in processing of the 5'-end of pre-16S rRNA. The sequence is that of Putative pre-16S rRNA nuclease from Shouchella clausii (strain KSM-K16) (Alkalihalobacillus clausii).